We begin with the raw amino-acid sequence, 248 residues long: DNA polymerase sliding clamp 2 (248 aa).

This sequence belongs to the PCNA family. The subunits circularize to form a toroid; DNA passes through its center. Replication factor C (RFC) is required to load the toroid on the DNA. Forms a dimeric complex with PCNA3 and trimeric complexes PCNA123 and PCNA323; does not form homotrimers. Crystal structures show a heterotetramer of 2 PCNA2 and 2 PCNA3, which would be large enough to clamp a Holliday junction.

Functionally, sliding clamp subunit that acts as a moving platform for DNA processing. Responsible for tethering the catalytic subunit of DNA polymerase and other proteins to DNA during high-speed replication. Both trimeric complexes inhibit DNA ligase and both 3'-5' and 5'-3' activity of Hel308 (Hjm) helicase, but stimulate Hjc, the Holliday junction cleavage enzyme. This chain is DNA polymerase sliding clamp 2, found in Sulfurisphaera tokodaii (strain DSM 16993 / JCM 10545 / NBRC 100140 / 7) (Sulfolobus tokodaii).